Consider the following 414-residue polypeptide: uncharacterized protein (414 aa).

3 disordered regions span residues 136 to 168, 297 to 333, and 346 to 414; these read SSKSMTPTAEKQLEKPLENGSELQEGDSLTVPT, PQNFPNSGMQRAVQAPRPQNKMSYHRNNKNRNAENAS, and ALNA…NGSK. Polar residues predominate over residues 350-359; sequence PSRSRPTHGS. The span at 399 to 414 shows a compositional bias: basic and acidic residues; that stretch reads SKSEKIYPEPRRNGSK.

This is an uncharacterized protein from Homo sapiens (Human).